The primary structure comprises 1410 residues: DNA-directed RNA polymerase subunit beta' (1410 aa).

Positions 70, 72, 85, and 88 each coordinate Zn(2+). Residues D460, D462, and D464 each coordinate Mg(2+). Zn(2+) is bound by residues C814, C888, C895, and C898.

The protein belongs to the RNA polymerase beta' chain family. As to quaternary structure, the RNAP catalytic core consists of 2 alpha, 1 beta, 1 beta' and 1 omega subunit. When a sigma factor is associated with the core the holoenzyme is formed, which can initiate transcription. The cofactor is Mg(2+). Zn(2+) is required as a cofactor.

The catalysed reaction is RNA(n) + a ribonucleoside 5'-triphosphate = RNA(n+1) + diphosphate. DNA-dependent RNA polymerase catalyzes the transcription of DNA into RNA using the four ribonucleoside triphosphates as substrates. This is DNA-directed RNA polymerase subunit beta' from Buchnera aphidicola subsp. Cinara cedri (strain Cc).